A 246-amino-acid polypeptide reads, in one-letter code: 14-3-3 protein beta/alpha (246 aa).

An N-acetylmethionine modification is found at Met1. Thr2 bears the N-acetylthreonine; in 14-3-3 protein beta/alpha, N-terminally processed mark. Position 2 is a phosphothreonine (Thr2). An N6-acetyllysine modification is found at Lys5. N6-acetyllysine; alternate is present on Lys51. Residue Lys51 forms a Glycyl lysine isopeptide (Lys-Gly) (interchain with G-Cter in SUMO2); alternate linkage. Ser60 carries the phosphoserine modification. The residue at position 70 (Lys70) is an N6-acetyllysine. A 3'-nitrotyrosine mark is found at Tyr84 and Tyr106. Lys117 is subject to N6-acetyllysine. Phosphoserine occurs at positions 186 and 232.

The protein belongs to the 14-3-3 family. Homodimer. Interacts with SAMSN1 and PRKCE. Interacts with AKAP13. Interacts with SSH1 and TORC2/CRTC2. Interacts with ABL1; the interaction results in cytoplasmic location of ABL1 and inhibition of cABL-mediated apoptosis. Interacts with ROR2 (dimer); the interaction results in phosphorylation of YWHAB on tyrosine residues. Interacts with GAB2. Interacts with YAP1 (phosphorylated form). Interacts with the phosphorylated (by AKT1) form of SRPK2. Interacts with PKA-phosphorylated AANAT. Interacts with MYO1C. Interacts with SIRT2. Interacts with the 'Thr-369' phosphorylated form of DAPK2. Interacts with PI4KB, TBC1D22A and TBC1D22B. Interacts with the 'Ser-1134' and 'Ser-1161' phosphorylated form of SOS1. Interacts (via phosphorylated form) with YWHAB; this interaction occurs in a protein kinase AKT1-dependent manner. Interacts with SLITRK1. Interacts with SYNPO2 (phosphorylated form); YWHAB competes with ACTN2 for interaction with SYNPO2. Interacts with RIPOR2 (via phosphorylated form); this interaction occurs in a chemokine-dependent manner and does not compete for binding of RIPOR2 with RHOA nor blocks inhibition of RIPOR2-mediated RHOA activity. Interacts with MARK2 and MARK3. Interacts with TESK1; the interaction is dependent on the phosphorylation of TESK1 'Ser-439' and inhibits TESK1 kinase activity. Interacts with MEFV. Interacts with HDAC4. Interacts with ADAM22 (via C-terminus). Post-translationally, the alpha, brain-specific form differs from the beta form in being phosphorylated. Phosphorylated on Ser-60 by protein kinase C delta type catalytic subunit in a sphingosine-dependent fashion. Isoform Short contains a N-acetylmethionine at position 1.

It localises to the cytoplasm. Its subcellular location is the melanosome. Its function is as follows. Adapter protein implicated in the regulation of a large spectrum of both general and specialized signaling pathways. Binds to a large number of partners, usually by recognition of a phosphoserine or phosphothreonine motif. Binding generally results in the modulation of the activity of the binding partner. Negative regulator of osteogenesis. Blocks the nuclear translocation of the phosphorylated form (by AKT1) of SRPK2 and antagonizes its stimulatory effect on cyclin D1 expression resulting in blockage of neuronal apoptosis elicited by SRPK2. Negative regulator of signaling cascades that mediate activation of MAP kinases via AKAP13. The polypeptide is 14-3-3 protein beta/alpha (Ywhab) (Rattus norvegicus (Rat)).